The following is a 1854-amino-acid chain: Calcium-channel protein cch1 (1854 aa).

Low complexity predominate over residues 1–15; sequence MSSSSNSDPSSSPDN. The tract at residues 1 to 33 is disordered; sequence MSSSSNSDPSSSPDNTDFIPLKDNPKDTSSYIN. N-linked (GlcNAc...) asparagine glycosylation is present at asparagine 40. 3 consecutive transmembrane segments (helical) span residues 184-204, 220-240, and 274-294; these read HPLYNIFIFVVIVLHAVLLMI, IIVIGILYTLEMLLKIYLFGF, and DFVAIVALWISVIGKKQQGIF. Asparagine 310 carries an N-linked (GlcNAc...) asparagine glycan. The next 8 helical transmembrane spans lie at 328-348, 427-447, 461-481, 514-534, 549-569, 581-601, 606-626, and 642-662; these read PLVQVVSFNAFFGVMIAILGV, FFNSLELIFVIMSSNGFTDIM, LFIISAYFLTLWLMSLVIAVV, YLFYSNFIWISFIVAQFVTLC, LIFYACVDFLLAAEVILRFFA, YTNLVDIVLAVLNLVTLLPSI, VAFGWLSIFAIARIYRCILLI, and QLLNLMLFLVIVLFIASLCAV. Residue asparagine 699 is glycosylated (N-linked (GlcNAc...) asparagine). The chain crosses the membrane as a helical span at residues 723–743; the sequence is FFTLWFLFSNNVVLSMFIAVI. N-linked (GlcNAc...) asparagine glycosylation is present at asparagine 786. The next 3 membrane-spanning stretches (helical) occupy residues 946–966, 980–1000, and 1021–1041; these read VFIYACILTAVIIECIATPIY, FVWTEVAFATIFTIEAAIKII, and FFVLVTLWINLYAVLTSHALL. N-linked (GlcNAc...) asparagine glycosylation is present at asparagine 1058. Transmembrane regions (helical) follow at residues 1075 to 1095 and 1148 to 1168; these read FFKIFSAAVVSATLLIPFALW and FPHALLALFEIASIEGWVDIM. The N-linked (GlcNAc...) asparagine glycan is linked to asparagine 1184. 4 consecutive transmembrane segments (helical) span residues 1193-1213, 1274-1294, 1302-1322, and 1331-1351; these read FVLFNLVSMIYILTLFIAIII, FTGLYIVHLLFLLTIFYPCPI, SIFLILSICYTINICVKVYGL, and FWNMFDVVVTLGSLTCNIAIL. Asparagine 1356 carries N-linked (GlcNAc...) asparagine glycosylation. A run of 3 helical transmembrane segments spans residues 1358–1378, 1393–1413, and 1486–1506; these read SLTLLQTTLLVLVTVHLIPKF, PSIFSLIATWIVLYITFAIAF, and FIAWNIISMYIFVNMFITVVF. Asparagine 1508 and asparagine 1773 each carry an N-linked (GlcNAc...) asparagine glycan. Residues 1764–1792 are disordered; that stretch reads TIASGEGDDNHSVEDHLKVPTDNEPRRSP. The span at 1771 to 1790 shows a compositional bias: basic and acidic residues; the sequence is DDNHSVEDHLKVPTDNEPRR.

It belongs to the calcium channel alpha-1 subunit (TC 1.A.1.11) family. Interacts with yam8 to form a Ca(2+) influx channel.

It localises to the cell membrane. Its function is as follows. Voltage-gated, high-affinity calcium channel that functions together with yam8 to mediate calcium entry into cells. Required during conditions of environmental stress. This chain is Calcium-channel protein cch1 (cch1), found in Schizosaccharomyces pombe (strain 972 / ATCC 24843) (Fission yeast).